The following is a 368-amino-acid chain: Flagellar P-ring protein (368 aa).

A signal peptide spans 1-24 (MDKPMKRIFVVLVILLVLPQLALA).

This sequence belongs to the FlgI family. The basal body constitutes a major portion of the flagellar organelle and consists of four rings (L,P,S, and M) mounted on a central rod.

Its subcellular location is the periplasm. It localises to the bacterial flagellum basal body. Functionally, assembles around the rod to form the L-ring and probably protects the motor/basal body from shearing forces during rotation. This Geobacter sulfurreducens (strain ATCC 51573 / DSM 12127 / PCA) protein is Flagellar P-ring protein.